The chain runs to 389 residues: Type 2 DNA topoisomerase 6 subunit A (389 aa).

Residues 12 to 162 (EARRKAANIL…MLILSKEKGK (151 aa)) enclose the Topo IIA-type catalytic domain. Tyrosine 106 (O-(5'-phospho-DNA)-tyrosine intermediate) is an active-site residue. Mg(2+) is bound by residues glutamate 209 and aspartate 261.

The protein belongs to the TOP6A family. As to quaternary structure, homodimer. Heterotetramer of two Top6A and two Top6B chains. Mg(2+) serves as cofactor.

It carries out the reaction ATP-dependent breakage, passage and rejoining of double-stranded DNA.. Its activity is regulated as follows. Not inhibited by the DNA gyrase inhibitor novobiocin, instead inhibited by eukaryotic topoisomerase inhibitors such as m- and o-amsacrine, ellipticine, and the quinolone CP-115,953. Relaxes both positive and negative supercoils and exhibits a strong decatenase and unknotting activity; it cannot introduce DNA supercoils. ATP is absolutely required for DNA cleavage; the nonhydrolyzable analog AMP-PNP generates nicked or linear products from a supercoiled dsDNA substrate. Generates staggered two-nucleotide long 5' overhangs. The enzyme is covalently attached transiently to the 5'-ends of the cleaved strands. The polypeptide is Type 2 DNA topoisomerase 6 subunit A (Saccharolobus shibatae (strain ATCC 51178 / DSM 5389 / JCM 8931 / NBRC 15437 / B12) (Sulfolobus shibatae)).